Consider the following 508-residue polypeptide: tRNA-2-methylthio-N(6)-dimethylallyladenosine synthase (508 aa).

The segment at 1–21 (MNEEQRKASGQVSSSDKKSEK) is disordered. An MTTase N-terminal domain is found at 65–183 (RKFYIRTYGC…LPELLSECYL (119 aa)). [4Fe-4S] cluster-binding residues include Cys-74, Cys-110, Cys-144, Cys-220, Cys-224, and Cys-227. In terms of domain architecture, Radical SAM core spans 206–436 (RQGKIKGWVN…NALVNEISAK (231 aa)). The TRAM domain maps to 439 to 502 (KEYEGQTVEV…TWSLDGEMVG (64 aa)).

Belongs to the methylthiotransferase family. MiaB subfamily. As to quaternary structure, monomer. [4Fe-4S] cluster serves as cofactor.

The protein resides in the cytoplasm. It carries out the reaction N(6)-dimethylallyladenosine(37) in tRNA + (sulfur carrier)-SH + AH2 + 2 S-adenosyl-L-methionine = 2-methylsulfanyl-N(6)-dimethylallyladenosine(37) in tRNA + (sulfur carrier)-H + 5'-deoxyadenosine + L-methionine + A + S-adenosyl-L-homocysteine + 2 H(+). Catalyzes the methylthiolation of N6-(dimethylallyl)adenosine (i(6)A), leading to the formation of 2-methylthio-N6-(dimethylallyl)adenosine (ms(2)i(6)A) at position 37 in tRNAs that read codons beginning with uridine. This chain is tRNA-2-methylthio-N(6)-dimethylallyladenosine synthase, found in Bacillus pumilus (strain SAFR-032).